Consider the following 89-residue polypeptide: Small ribosomal subunit protein uS15 (89 aa).

Basic and acidic residues predominate over residues 1–13 (MTISKERKEEVIS). The segment at 1–24 (MTISKERKEEVISEHGAAAGDTGS) is disordered.

It belongs to the universal ribosomal protein uS15 family. As to quaternary structure, part of the 30S ribosomal subunit. Forms a bridge to the 50S subunit in the 70S ribosome, contacting the 23S rRNA.

Functionally, one of the primary rRNA binding proteins, it binds directly to 16S rRNA where it helps nucleate assembly of the platform of the 30S subunit by binding and bridging several RNA helices of the 16S rRNA. Forms an intersubunit bridge (bridge B4) with the 23S rRNA of the 50S subunit in the ribosome. This chain is Small ribosomal subunit protein uS15, found in Rhodopirellula baltica (strain DSM 10527 / NCIMB 13988 / SH1).